The primary structure comprises 1627 residues: Adhesin P1 (1627 aa).

The first 59 residues, 1-59 (MHQTKKTALSKSTWILILTATASLATGLTVVGHFTSTTTTLKRQQFSYTRPDEVALRHT), serve as a signal peptide directing secretion. 4 disordered regions span residues 219-238 (LPQQ…AMFG), 252-355 (NEKL…PWRP), 898-953 (WRND…TTQD), and 1274-1362 (SFGT…TGND). The span at 224–234 (TESGQNTSTTG) shows a compositional bias: polar residues. The segment covering 261-276 (TGSSTTSGSGQSTQRG) has biased composition (low complexity). Residues 282–297 (TKVKALKIEVKKKSDS) are compositionally biased toward basic and acidic residues. Composition is skewed to polar residues over residues 903–933 (ASSG…SAGN), 939–953 (QDNI…TTQD), and 1274–1297 (SFGT…VFGT). Residues 1307 to 1320 (SGGGAGGGSSGSGQ) show a composition bias toward gly residues. Low complexity predominate over residues 1341 to 1352 (STSDGNTSSTNN). Residues 1403–1415 (GPQSVKFKSPDQI) are cytadherence epitope. A helical membrane pass occupies residues 1527–1547 (AITVPIVVIVLSVTLGLAIGI). The tract at residues 1589–1627 (QAPKRLKQTSAAKPGAPRPPVPPKPGAPKPPVQPPKKPA) is disordered. Residues 1604-1627 (APRPPVPPKPGAPKPPVQPPKKPA) are compositionally biased toward pro residues.

It belongs to the adhesin P1 family.

It is found in the cell membrane. It localises to the cell projection. The protein localises to the attachment organelle. The protein resides in the cell surface. In terms of biological role, the protein is the major adhesin mediating the attachment of this mycoplasma to respiratory epithelium. The chain is Adhesin P1 (mgpA) from Mycoplasma pneumoniae (strain ATCC 29342 / M129 / Subtype 1) (Mycoplasmoides pneumoniae).